The sequence spans 1944 residues: uncharacterized protein (1944 aa).

A disordered region spans residues 908 to 999; it reads SQNLNFLKSK…SESEEESSNG (92 aa). Basic and acidic residues-rich tracts occupy residues 916–929 and 939–949; these read SKQE…ESAK and LSEKLNSDNHI. Over residues 985–996 the composition is skewed to acidic residues; the sequence is SDEDTSESEEES. Residue 1293-1300 coordinates ATP; it reads GPPGTGKT. The tract at residues 1824-1944 is disordered; sequence QEAHKVKKRH…PPKVEHFKRK (121 aa). Composition is skewed to basic and acidic residues over residues 1843–1852 and 1869–1891; these read GTERDEDIPN and KVTK…KIDE. Residues 1912 to 1922 are compositionally biased toward basic residues; it reads GHMKKSKKPKS.

Belongs to the DNA2/NAM7 helicase family.

The protein resides in the nucleus. This is an uncharacterized protein from Schizosaccharomyces pombe (strain 972 / ATCC 24843) (Fission yeast).